The sequence spans 464 residues: Elongation factor 1-alpha (464 aa).

The tr-type G domain occupies 5-242; it reads KTHINIVVIG…DSVVPPQRPT (238 aa). GTP-binding positions include 14–21, 91–95, and 153–156; these read GHVDSGKS, DAPGH, and NKMD. E301 and E374 each carry 5-glutamyl glycerylphosphorylethanolamine.

This sequence belongs to the TRAFAC class translation factor GTPase superfamily. Classic translation factor GTPase family. EF-Tu/EF-1A subfamily.

Its subcellular location is the cytoplasm. Functionally, this protein promotes the GTP-dependent binding of aminoacyl-tRNA to the A-site of ribosomes during protein biosynthesis. The sequence is that of Elongation factor 1-alpha from Onchocerca volvulus.